Consider the following 108-residue polypeptide: Small ribosomal subunit protein eS25w (108 aa).

The interval 1–36 (MAPKKDKVPPPSSKPAKSGGGKQKKKKWSKGKQKEK) is disordered. Basic residues predominate over residues 22–31 (KQKKKKWSKG).

Belongs to the eukaryotic ribosomal protein eS25 family.

In Arabidopsis thaliana (Mouse-ear cress), this protein is Small ribosomal subunit protein eS25w (RPS25E).